Reading from the N-terminus, the 154-residue chain is UPF0756 membrane protein YtwI (154 aa).

Transmembrane regions (helical) follow at residues 8 to 28, 54 to 74, 87 to 107, and 117 to 137; these read FLIL…LFAV, WGVT…EIGF, WIAL…LTLL, and LVIG…GPLI.

This sequence belongs to the UPF0756 family.

The protein localises to the cell membrane. This Bacillus subtilis (strain 168) protein is UPF0756 membrane protein YtwI (ytwI).